Here is a 381-residue protein sequence, read N- to C-terminus: Alkanesulfonate monooxygenase (381 aa).

It belongs to the SsuD family. As to quaternary structure, homotetramer.

It carries out the reaction an alkanesulfonate + FMNH2 + O2 = an aldehyde + FMN + sulfite + H2O + 2 H(+). In terms of biological role, catalyzes the desulfonation of aliphatic sulfonates. This Citrobacter koseri (strain ATCC BAA-895 / CDC 4225-83 / SGSC4696) protein is Alkanesulfonate monooxygenase.